We begin with the raw amino-acid sequence, 522 residues long: MEIETRPHISGDEKEEEQPLSPAARLFHAPEFNCNIISVIGFKSKLDPCVFIRGFKESFIRHPRFSSKLVTDENGQNQRWVRTNVVVEDHFIVPKIKPQNIENSNAFLEDYVSDLMKIPLDTSRPLWELHLLDLKTSDAENVAVLKIHHSVGDGMSIMSLVLACMRKTSNPDELPSLPYQYRSSSRSSLLTTGSRSDSRLLWLVKVIWTAVILGLNTVCDALEFIVTTLFVKDTETPIKGDFLSTKSKQLRLVHRTVSLDDIKLTKNAMNMTINDVVLGVTQAGLSRYLARRYGEEETKNRKQKKLPKRIRLRSALLVNLRPTTGIQDLADMMEKGSKCRWGNWFGYVVFPFSIALRDDPLEHLEIAQKTISRKKNSYGAMLTYIFCRIIVKLLGIKVAASIINRMVSNTTMTFSNMVGPVEEVSFYGHPITYFASSAYGHPHALTIHCQSYMNKMTITLIVDPTVISDPHRLCDDWEESLRSIKAAVTKRESLRLWDYLRILHNRVAWLLYQIAGLLYRML.

The segment covering 1-12 (MEIETRPHISGD) has biased composition (basic and acidic residues). Residues 1-20 (MEIETRPHISGDEKEEEQPL) are disordered. At 1–205 (MEIETRPHIS…SDSRLLWLVK (205 aa)) the chain is on the cytoplasmic side. His149 acts as the Proton acceptor in catalysis. Residues 206–226 (VIWTAVILGLNTVCDALEFIV) form a helical membrane-spanning segment. The Lumenal portion of the chain corresponds to 227–522 (TTLFVKDTET…QIAGLLYRML (296 aa)). N-linked (GlcNAc...) asparagine glycosylation is found at Asn270 and Asn409.

In the N-terminal section; belongs to the long-chain O-acyltransferase family. In terms of tissue distribution, mostly expressed in roots, flowers and siliques.

It localises to the cell membrane. Its subcellular location is the endoplasmic reticulum membrane. It catalyses the reaction an acyl-CoA + a 1,2-diacyl-sn-glycerol = a triacyl-sn-glycerol + CoA. It carries out the reaction a long chain fatty alcohol + a fatty acyl-CoA = a wax ester + CoA. Its pathway is glycerolipid metabolism; triacylglycerol biosynthesis. The protein operates within lipid metabolism. Its function is as follows. Bifunctional wax ester synthase/diacylglycerol acyltransferase. Involved in cuticular wax biosynthesis. This is Wax ester synthase/diacylglycerol acyltransferase 4 from Arabidopsis thaliana (Mouse-ear cress).